An 841-amino-acid polypeptide reads, in one-letter code: Protein translocase subunit SecA (841 aa).

ATP-binding positions include Gln86, 104 to 108 (GEGKT), and Asp493. The disordered stretch occupies residues 788–822 (EEVAEGKAVRPSANGQEDKKAKRKPVRKAENIGRN). Positions 825, 827, 836, and 837 each coordinate Zn(2+).

This sequence belongs to the SecA family. As to quaternary structure, monomer and homodimer. Part of the essential Sec protein translocation apparatus which comprises SecA, SecYEG and auxiliary proteins SecDF. Other proteins may also be involved. The cofactor is Zn(2+).

It is found in the cell membrane. The protein localises to the cytoplasm. The enzyme catalyses ATP + H2O + cellular proteinSide 1 = ADP + phosphate + cellular proteinSide 2.. Its function is as follows. Part of the Sec protein translocase complex. Interacts with the SecYEG preprotein conducting channel. Has a central role in coupling the hydrolysis of ATP to the transfer of proteins into and across the cell membrane, serving as an ATP-driven molecular motor driving the stepwise translocation of polypeptide chains across the membrane. In Shouchella clausii (strain KSM-K16) (Alkalihalobacillus clausii), this protein is Protein translocase subunit SecA.